A 146-amino-acid chain; its full sequence is Catabolic 3-dehydroquinase (146 aa).

The active-site Proton acceptor is tyrosine 24. Substrate contacts are provided by asparagine 78, histidine 84, and aspartate 91. The active-site Proton donor is histidine 104. Residues 105–106 and arginine 115 contribute to the substrate site; that span reads IT.

The protein belongs to the type-II 3-dehydroquinase family. As to quaternary structure, homododecamer. Adopts a ring-like structure, composed of an arrangement of two hexameric rings stacked on top of one another.

It carries out the reaction 3-dehydroquinate = 3-dehydroshikimate + H2O. It participates in aromatic compound metabolism; 3,4-dihydroxybenzoate biosynthesis; 3,4-dihydroxybenzoate from 3-dehydroquinate: step 1/2. Its function is as follows. Is involved in the catabolism of quinate. Allows the utilization of quinate as carbon source via the beta-ketoadipate pathway. This Candida dubliniensis (strain CD36 / ATCC MYA-646 / CBS 7987 / NCPF 3949 / NRRL Y-17841) (Yeast) protein is Catabolic 3-dehydroquinase.